Consider the following 427-residue polypeptide: 3-phosphoshikimate 1-carboxyvinyltransferase (427 aa).

Residues Lys-22, Ser-23, and Arg-27 each contribute to the 3-phosphoshikimate site. Residue Lys-22 coordinates phosphoenolpyruvate. 2 residues coordinate phosphoenolpyruvate: Gly-96 and Arg-124. 7 residues coordinate 3-phosphoshikimate: Ser-169, Ser-170, Gln-171, Ser-197, Asp-313, Asn-336, and Lys-340. Residue Gln-171 coordinates phosphoenolpyruvate. Residue Asp-313 is the Proton acceptor of the active site. Residues Arg-344, Arg-386, and Lys-411 each coordinate phosphoenolpyruvate.

This sequence belongs to the EPSP synthase family. As to quaternary structure, monomer.

It is found in the cytoplasm. It carries out the reaction 3-phosphoshikimate + phosphoenolpyruvate = 5-O-(1-carboxyvinyl)-3-phosphoshikimate + phosphate. The protein operates within metabolic intermediate biosynthesis; chorismate biosynthesis; chorismate from D-erythrose 4-phosphate and phosphoenolpyruvate: step 6/7. Functionally, catalyzes the transfer of the enolpyruvyl moiety of phosphoenolpyruvate (PEP) to the 5-hydroxyl of shikimate-3-phosphate (S3P) to produce enolpyruvyl shikimate-3-phosphate and inorganic phosphate. The polypeptide is 3-phosphoshikimate 1-carboxyvinyltransferase (Klebsiella pneumoniae subsp. pneumoniae (strain ATCC 700721 / MGH 78578)).